The sequence spans 390 residues: Putative methylesterase 11, chloroplastic (390 aa).

Residues 1 to 46 constitute a chloroplast transit peptide; the sequence is MGNLCSLFTPPKPVKKRKPITKRQSSIGASSSGSGLNSNRWNNRVR. 2 disordered regions span residues 1 to 52 and 94 to 119; these read MGNL…SSRR and QGSC…DPLL. Low complexity predominate over residues 25–48; sequence SSIGASSSGSGLNSNRWNNRVRSS. Over residues 94–104 the composition is skewed to polar residues; the sequence is QGSCSKKNQLP. The span at 105-114 shows a compositional bias: low complexity; it reads RSSSSRSRSS. The region spanning 137 to 241 is the AB hydrolase-1 domain; that stretch reads NHFVLVHGGS…KAVFLAAAML (105 aa). Aspartate 213 serves as the catalytic Acyl-ester intermediate. Catalysis depends on charge relay system residues aspartate 339 and histidine 367.

This sequence belongs to the AB hydrolase superfamily. Methylesterase family.

The protein resides in the plastid. Its subcellular location is the chloroplast. Putative methylesterase. The polypeptide is Putative methylesterase 11, chloroplastic (Arabidopsis thaliana (Mouse-ear cress)).